Here is a 927-residue protein sequence, read N- to C-terminus: DNA-binding protein RFX6 (927 aa).

Disordered stretches follow at residues 1 to 21 and 81 to 108; these read MAKV…PQLP and NFSS…QKKS. Residues 123–198 constitute a DNA-binding region (RFX-type winged-helix); the sequence is TLQWLEDNYI…YHYYGIGIKE (76 aa).

This sequence belongs to the RFX family. Interacts with RFX3. In the adult pancreas, expression is restricted to the islets where it could be detected in all endocrine lineages.

It is found in the nucleus. Transcription factor required to direct islet cell differentiation during endocrine pancreas development. Specifically required for the differentiation of 4 of the 5 islet cell types and for the production of insulin. Not required for pancreatic PP (polypeptide-producing) cells differentiation. Acts downstream of NEUROG3 and regulates the transcription factors involved in beta-cell maturation and function, thereby restricting the expression of the beta-cell differentiation and specification genes, and thus the beta-cell fate choice. Activates transcription by forming a heterodimer with RFX3 and binding to the X-box in the promoter of target genes. Involved in glucose-stimulated insulin secretion by promoting insulin and L-type calcium channel gene transcription. The polypeptide is DNA-binding protein RFX6 (Rfx6) (Mus musculus (Mouse)).